The sequence spans 181 residues: Large ribosomal subunit protein uL5 (181 aa).

Belongs to the universal ribosomal protein uL5 family. As to quaternary structure, part of the 50S ribosomal subunit; contacts the 5S rRNA and probably tRNA. Forms a bridge to the 30S subunit in the 70S ribosome.

Its function is as follows. This is one of the proteins that bind and probably mediate the attachment of the 5S RNA into the large ribosomal subunit, where it forms part of the central protuberance. In the 70S ribosome it contacts protein S13 of the 30S subunit (bridge B1b), connecting the 2 subunits; this bridge is implicated in subunit movement. May contact the P site tRNA; the 5S rRNA and some of its associated proteins might help stabilize positioning of ribosome-bound tRNAs. In Methanococcus maripaludis (strain C6 / ATCC BAA-1332), this protein is Large ribosomal subunit protein uL5.